The following is a 534-amino-acid chain: ATP-dependent RNA helicase DBP3 (534 aa).

The tract at residues 1 to 96 (MGSKRKHESG…VSSSSSGYTQ (96 aa)) is disordered. Basic and acidic residues predominate over residues 8–30 (ESGDVEVKKPKHDNEVKGKEKKE). The segment covering 31–53 (KKEKKEKKEKKEKKEKKEKKEKK) has biased composition (basic residues). Residues 54-63 (EKKEKNEKKE) show a composition bias toward basic and acidic residues. The span at 82-92 (STVSTVSSSSS) shows a compositional bias: low complexity. A Q motif motif is present at residues 131-157 (LSFDHVQLQSKIAPIVTKFPKPTPIQS). The 171-residue stretch at 160-330 (WPYLLNGDDV…ATFMNKAVKV (171 aa)) folds into the Helicase ATP-binding domain. 173–180 (AETGSGKT) is a binding site for ATP. Positions 278–281 (DEAD) match the DEAD box motif. Residues 359-504 (RLLQLLRQYG…PVPDELLKFG (146 aa)) enclose the Helicase C-terminal domain.

The protein belongs to the DEAD box helicase family. DDX5/DBP2 subfamily.

It localises to the nucleus. The protein resides in the nucleolus. The enzyme catalyses ATP + H2O = ADP + phosphate + H(+). In terms of biological role, ATP-dependent RNA helicase required for 60S ribosomal subunit synthesis. Involved in efficient pre-rRNA processing, predominantly at site A3, which is necessary for the normal formation of 25S and 5.8S rRNAs. This chain is ATP-dependent RNA helicase DBP3 (DBP3), found in Meyerozyma guilliermondii (strain ATCC 6260 / CBS 566 / DSM 6381 / JCM 1539 / NBRC 10279 / NRRL Y-324) (Yeast).